We begin with the raw amino-acid sequence, 529 residues long: Calcium-dependent protein kinase 3 (529 aa).

Positions 1 to 73 (MGHRHSKSKS…GRILGRPMEE (73 aa)) are disordered. A lipid anchor (N-myristoyl glycine) is attached at Gly2. A compositionally biased stretch (gly residues) spans 39-53 (SGSGTVGSSGSGTGG). One can recognise a Protein kinase domain in the interval 78 to 336 (YEFGRELGRG…AAEVLNHPWI (259 aa)). ATP-binding positions include 84–92 (LGRGQFGVT) and Lys107. Residue Asp202 is the Proton acceptor of the active site. The residue at position 242 (Ser242) is a Phosphoserine. Positions 342–372 (ASDKPLDNAVLSRMKQFRAMNKLKKMALKVI) are autoinhibitory domain. EF-hand domains are found at residues 379–414 (EEII…LGSK), 415–450 (ISEA…MNRI), 451–485 (ERED…KYNM), and 486–521 (GDDK…GNPE). 19 residues coordinate Ca(2+): Asp392, Asp394, Asn396, Glu403, Asp428, Asp430, Asp432, Ser434, Glu439, Asp464, Asp466, Ser468, Tyr470, Glu475, Asp499, Asp501, Asp503, Lys505, and Glu510.

Belongs to the protein kinase superfamily. Ser/Thr protein kinase family. CDPK subfamily. In terms of assembly, interacts with GHR1. In terms of tissue distribution, expressed in both guard cells and mesophyll cells.

Its subcellular location is the cytoplasm. It is found in the nucleus. The catalysed reaction is L-seryl-[protein] + ATP = O-phospho-L-seryl-[protein] + ADP + H(+). It catalyses the reaction L-threonyl-[protein] + ATP = O-phospho-L-threonyl-[protein] + ADP + H(+). Its activity is regulated as follows. Activated by calcium. Autophosphorylation may play an important role in the regulation of the kinase activity. In terms of biological role, may play a role in signal transduction pathways that involve calcium as a second messenger. Functions in abscisic acid (ABA) regulation of guard cell S-type anion- and Ca(2+)-permeable channels and stomatal closure. The sequence is that of Calcium-dependent protein kinase 3 from Arabidopsis thaliana (Mouse-ear cress).